Reading from the N-terminus, the 240-residue chain is Protein GrpE (240 aa).

Over residues 1–13 (MTDNQRQSTTDGQ) the composition is skewed to polar residues. Positions 1-89 (MTDNQRQSTT…DAEQKAEEHW (89 aa)) are disordered. The segment covering 20–38 (AQATAEAAEQTQATQASAA) has biased composition (low complexity). Residues 65–89 (EALRQRVEELEKALADAEQKAEEHW) show a composition bias toward basic and acidic residues.

Belongs to the GrpE family. Homodimer.

It is found in the cytoplasm. Functionally, participates actively in the response to hyperosmotic and heat shock by preventing the aggregation of stress-denatured proteins, in association with DnaK and GrpE. It is the nucleotide exchange factor for DnaK and may function as a thermosensor. Unfolded proteins bind initially to DnaJ; upon interaction with the DnaJ-bound protein, DnaK hydrolyzes its bound ATP, resulting in the formation of a stable complex. GrpE releases ADP from DnaK; ATP binding to DnaK triggers the release of the substrate protein, thus completing the reaction cycle. Several rounds of ATP-dependent interactions between DnaJ, DnaK and GrpE are required for fully efficient folding. In Halorhodospira halophila (strain DSM 244 / SL1) (Ectothiorhodospira halophila (strain DSM 244 / SL1)), this protein is Protein GrpE.